Reading from the N-terminus, the 869-residue chain is Phenylalanine--tRNA ligase beta subunit (869 aa).

One can recognise a tRNA-binding domain in the interval 41–162; that stretch reads SQVTGPIVVG…QYGFSEAEYE (122 aa). The B5 domain maps to 443–519; that stretch reads PRAKAIHFKA…RLVGYDQIPI (77 aa). Residues D497, D503, E506, and E507 each contribute to the Mg(2+) site. The FDX-ACB domain maps to 776–868; sequence STFPPVKQDL…EAAEIGAQLR (93 aa).

It belongs to the phenylalanyl-tRNA synthetase beta subunit family. Type 1 subfamily. As to quaternary structure, tetramer of two alpha and two beta subunits. It depends on Mg(2+) as a cofactor.

The protein resides in the cytoplasm. The enzyme catalyses tRNA(Phe) + L-phenylalanine + ATP = L-phenylalanyl-tRNA(Phe) + AMP + diphosphate + H(+). In Bifidobacterium longum (strain NCC 2705), this protein is Phenylalanine--tRNA ligase beta subunit.